Here is a 335-residue protein sequence, read N- to C-terminus: Probable magnesium transporter NIPA1 (335 aa).

Over 1–7 the chain is Extracellular; that stretch reads MDQMSPD. A helical transmembrane segment spans residues 8 to 28; the sequence is NINGVILAVSSSIFIGSSFII. At 29 to 55 the chain is on the cytoplasmic side; sequence KKKGLKKAGASGVRAGEGGYGYLKEPW. The chain crosses the membrane as a helical span at residues 56 to 76; the sequence is WWAGMITMIVGEVANFAAYAF. Residues 77-79 lie on the Extracellular side of the membrane; it reads APA. Residues 80-100 traverse the membrane as a helical segment; sequence ILVTPLGALSIIFSAVLAHFI. At 101–104 the chain is on the cytoplasmic side; sequence LKEK. A helical transmembrane segment spans residues 105–125; it reads LHMFGILGCILCVVGSTTIVL. Residues 126–143 are Extracellular-facing; it reads HAPHEQKIESVKQIWQLA. The chain crosses the membrane as a helical span at residues 144–164; sequence IEPGFLVYSAVIVIVVAILIF. Residues 165–179 lie on the Cytoplasmic side of the membrane; that stretch reads YYEPRYGKTHMIVYV. Residues 180 to 200 traverse the membrane as a helical segment; sequence GICSLMGSLTVMSVKAVAIAI. Residues 201–212 are Extracellular-facing; that stretch reads KLTFSGTNQFKY. The helical transmembrane segment at 213–233 threads the bilayer; that stretch reads FNTWIFILVVATCCILQINYL. The Cytoplasmic segment spans residues 234–244; the sequence is NKALDTFNTAV. The chain crosses the membrane as a helical span at residues 245–265; sequence ISPVYYVMFTTFTIIASMIMF. At 266–272 the chain is on the extracellular side; the sequence is KDWASQS. A helical transmembrane segment spans residues 273–293; the sequence is GLKIATELCGFVTILSGTFLL. Residues 294-335 are Cytoplasmic-facing; it reads HKTKDMGNSASGRGSISMPTRDTPVFTNSGSGRSSSSDKVAS. The span at 303-321 shows a compositional bias: polar residues; the sequence is ASGRGSISMPTRDTPVFTN. Positions 303-335 are disordered; that stretch reads ASGRGSISMPTRDTPVFTNSGSGRSSSSDKVAS. Positions 322 to 335 are enriched in low complexity; sequence SGSGRSSSSDKVAS.

The protein belongs to the NIPA (TC 2.A.7) family. As to quaternary structure, homodimer.

The protein localises to the cell membrane. Its subcellular location is the early endosome. Acts as a Mg(2+) transporter. Can also transport other divalent cations such as Fe(2+), Sr(2+), Ba(2+), Mn(2+) and Co(2+) but to a much less extent than Mg(2+). This is Probable magnesium transporter NIPA1 from Arabidopsis thaliana (Mouse-ear cress).